Reading from the N-terminus, the 251-residue chain is 2,3-bisphosphoglycerate-dependent phosphoglycerate mutase (251 aa).

Residues 11-18, 24-25, Arg-63, 90-93, Lys-101, 117-118, and 184-185 contribute to the substrate site; these read RHGESDWN, TG, ERHY, RR, and GN. Catalysis depends on His-12, which acts as the Tele-phosphohistidine intermediate. The Proton donor/acceptor role is filled by Glu-90.

Belongs to the phosphoglycerate mutase family. BPG-dependent PGAM subfamily.

It catalyses the reaction (2R)-2-phosphoglycerate = (2R)-3-phosphoglycerate. The protein operates within carbohydrate degradation; glycolysis; pyruvate from D-glyceraldehyde 3-phosphate: step 3/5. In terms of biological role, catalyzes the interconversion of 2-phosphoglycerate and 3-phosphoglycerate. In Mycobacterium marinum (strain ATCC BAA-535 / M), this protein is 2,3-bisphosphoglycerate-dependent phosphoglycerate mutase.